Consider the following 408-residue polypeptide: DNA replication and repair protein RecF (408 aa).

30-37 (GSNGQGKT) is a binding site for ATP. 2 disordered regions span residues 220-252 (DHGPSARPELSILADDPGEDDVADETGARDGGR) and 389-408 (SPTPASASEPASPGEDGGAA). Over residues 389 to 402 (SPTPASASEPASPG) the composition is skewed to low complexity.

The protein belongs to the RecF family.

It localises to the cytoplasm. In terms of biological role, the RecF protein is involved in DNA metabolism; it is required for DNA replication and normal SOS inducibility. RecF binds preferentially to single-stranded, linear DNA. It also seems to bind ATP. In Clavibacter sepedonicus (Clavibacter michiganensis subsp. sepedonicus), this protein is DNA replication and repair protein RecF.